The following is a 295-amino-acid chain: Ribosomal protein L11 methyltransferase (295 aa).

Residues T138, G161, D183, and N230 each coordinate S-adenosyl-L-methionine.

This sequence belongs to the methyltransferase superfamily. PrmA family.

The protein resides in the cytoplasm. The catalysed reaction is L-lysyl-[protein] + 3 S-adenosyl-L-methionine = N(6),N(6),N(6)-trimethyl-L-lysyl-[protein] + 3 S-adenosyl-L-homocysteine + 3 H(+). Methylates ribosomal protein L11. This chain is Ribosomal protein L11 methyltransferase, found in Bradyrhizobium diazoefficiens (strain JCM 10833 / BCRC 13528 / IAM 13628 / NBRC 14792 / USDA 110).